The primary structure comprises 544 residues: Probable protein kinase UbiB (544 aa).

Residues 123–501 form the Protein kinase domain; the sequence is EFDIKPLASA…KRQQATGKFL (379 aa). ATP contacts are provided by residues 129-137 and Lys-152; that span reads LASASIAQV. Asp-287 acts as the Proton acceptor in catalysis. The next 2 helical transmembrane spans lie at 496–516 and 519–539; these read ATGKFLFGVGATLVVCSAILV and AYEQLSMASGIAGVTFWLLSW.

This sequence belongs to the ABC1 family. UbiB subfamily.

The protein resides in the cell inner membrane. It participates in cofactor biosynthesis; ubiquinone biosynthesis [regulation]. In terms of biological role, is probably a protein kinase regulator of UbiI activity which is involved in aerobic coenzyme Q (ubiquinone) biosynthesis. This chain is Probable protein kinase UbiB, found in Vibrio parahaemolyticus serotype O3:K6 (strain RIMD 2210633).